The chain runs to 104 residues: Class I hydrophobin 4 (104 aa).

A signal peptide spans 1–16 (MFASTVFVSLLAVAAA). Disulfide bonds link Cys26–Cys85, Cys34–Cys79, Cys35–Cys61, and Cys86–Cys99.

It belongs to the fungal hydrophobin family. As to quaternary structure, self-assembles to form functional amyloid fibrils called rodlets. Self-assembly into fibrillar rodlets occurs spontaneously at hydrophobic:hydrophilic interfaces and the rodlets further associate laterally to form amphipathic monolayers.

It localises to the secreted. It is found in the cell wall. Its function is as follows. Aerial growth, conidiation, and dispersal of filamentous fungi in the environment rely upon a capability of their secreting small amphipathic proteins called hydrophobins (HPBs) with low sequence identity. Class I can self-assemble into an outermost layer of rodlet bundles on aerial cell surfaces, conferring cellular hydrophobicity that supports fungal growth, development and dispersal; whereas Class II form highly ordered films at water-air interfaces through intermolecular interactions but contribute nothing to the rodlet structure. HYD4 is a class I hydrophobin that negatively regulates aerial mycelial growth, conidiation, carotenoid and adenosine synthesis, resistance to oxidant stress, and fruiting body development. Seems not to be involved in the mycelial growth rate, the hydrophobicity of the mycelia and conidia, nor the conidial virulence on silkworm pupae. This chain is Class I hydrophobin 4, found in Cordyceps militaris (Caterpillar fungus).